The chain runs to 438 residues: GTPase Der (438 aa).

EngA-type G domains are found at residues 4 to 168 and 177 to 352; these read PIVA…PEGN and IRIA…GNYC. GTP contacts are provided by residues 10–17, 57–61, 120–123, 183–190, 230–234, and 295–298; these read GRPNVGKS, DTGGI, NKID, DTAGL, and NKWD. The region spanning 353–437 is the KH-like domain; the sequence is KRIKTGILND…GIKLEFRERK (85 aa).

This sequence belongs to the TRAFAC class TrmE-Era-EngA-EngB-Septin-like GTPase superfamily. EngA (Der) GTPase family. As to quaternary structure, associates with the 50S ribosomal subunit.

Functionally, GTPase that plays an essential role in the late steps of ribosome biogenesis. The protein is GTPase Der of Clostridium novyi (strain NT).